The following is a 1071-amino-acid chain: Exportin-1 (1071 aa).

Residues 46–112 (AQEVLTHLKE…KKYVVGLIIK (67 aa)) enclose the Importin N-terminal domain. HEAT repeat units follow at residues 217 to 240 (QNAP…PLGY), 241 to 277 (IFET…VSVS), 354 to 472 (MLLV…YVDT), 515 to 553 (RFLV…QYPR), 560 to 597 (KFLK…KCRR), and 602 to 639 (VQVG…AVGY). The tract at residues 327–450 (CTFLKEHGQL…VREFMKDTDS (124 aa)) is necessary for interaction with Ran and nuclear export complex formation. A Phosphoserine modification is found at Ser391. The tract at residues 411-481 (TVLSKVRLLM…TEIIMTKKLQ (71 aa)) is necessary for interaction with RANBP3. Lys446 bears the N6-acetyllysine mark. Thr448 carries the phosphothreonine modification. Ser450 carries the post-translational modification Phosphoserine. Tyr454 bears the Phosphotyrosine mark. At Lys693 the chain carries N6-acetyllysine. HEAT repeat units follow at residues 775 to 813 (NFVP…KLGG), 885 to 916 (TMRN…SFYQ), 917 to 954 (TYFC…NLVE), and 1002 to 1039 (FSLN…EERE). Ser1031 carries the phosphoserine modification.

Belongs to the exportin family. In terms of assembly, found in a U snRNA export complex with PHAX/RNUXA, NCBP1/CBP80, NCBP2/CBP20, RAN, XPO1 and m7G-capped RNA. Component of a nuclear export receptor complex composed of KPNB1, RAN, SNUPN and XPO1. Found in a trimeric export complex with SNUPN, RAN and XPO1. Found in a nuclear export complex with RANBP3 and RAN. Found in a 60S ribosomal subunit export complex with NMD3, RAN, XPO1. Interacts with DDX3X, NMD3, NUP42, NUP88, NUP214, RANBP3 and TERT. Interacts with NEMF (via its N-terminus). Interacts with the monomeric form of BIRC5/survivin deacetylated at 'Lys-129'. Interacts with SERTAD2; the interaction translocates SERTAD2 out of the nucleus. Interacts with ATF2. Interacts with SLC35G1 and STIM1. Interacts with DCAF8. Interacts with DTNBP1 and the interaction translocates DTNBP1 out of the nucleus. Interacts with CPEB3. Interacts with HAX1. Interacts with BOK; translocates to the cytoplasm. Interacts with HSP90AB1. Interacts with LRPPRC; interacts with LRPPRC alone and also when LRPPRC is in complex with EIF4E and with EIF4E sensitivity element (4ESE)-containing mRNAs to form an EIF4E-dependent mRNA export complex.

Its subcellular location is the cytoplasm. It localises to the nucleus. The protein resides in the nucleoplasm. It is found in the cajal body. The protein localises to the nucleolus. Its function is as follows. Mediates the nuclear export of cellular proteins (cargos) bearing a leucine-rich nuclear export signal (NES) and of RNAs. In the nucleus, in association with RANBP3, binds cooperatively to the NES on its target protein and to the GTPase Ran in its active GTP-bound form. Docking of this complex to the nuclear pore complex (NPC) is mediated through binding to nucleoporins. Upon transit of a nuclear export complex into the cytoplasm, disassembling of the complex and hydrolysis of Ran-GTP to Ran-GDP (induced by RANBP1 and RANGAP1, respectively) cause release of the cargo from the export receptor. The directionality of nuclear export is thought to be conferred by an asymmetric distribution of the GTP- and GDP-bound forms of Ran between the cytoplasm and nucleus. Involved in U3 snoRNA transport from Cajal bodies to nucleoli. Binds to late precursor U3 snoRNA bearing a TMG cap. This Mus musculus (Mouse) protein is Exportin-1 (Xpo1).